A 677-amino-acid polypeptide reads, in one-letter code: Beta-galactosidase (677 aa).

The N-terminal stretch at 1 to 23 (MPGFLVRILPLLLVLLLLGPTRG) is a signal peptide. Residues 24–28 (LRNAT) constitute a propeptide that is removed on maturation. N26 carries an N-linked (GlcNAc...) asparagine glycan. Residues Y83, E129, and N187 each coordinate substrate. The Proton donor role is filled by E188. The cysteines at positions 195 and 230 are disulfide-linked. Residue N247 is glycosylated (N-linked (GlcNAc...) asparagine). Residue E268 is the Nucleophile of the active site. Substrate is bound at residue Y333. N464, N498, N542, N545, and N555 each carry an N-linked (GlcNAc...) asparagine glycan. A disulfide bridge links C626 with C634. Residues 650 to 677 (YDHPSKPVEKRLMPPPPQKNKDSWLDHV) are disordered. 2 stretches are compositionally biased toward basic and acidic residues: residues 652 to 661 (HPSKPVEKRL) and 668 to 677 (KNKDSWLDHV).

The protein belongs to the glycosyl hydrolase 35 family. As to quaternary structure, homodimer. May form higher multimers. In terms of tissue distribution, detected in placenta (at protein level). Detected in fibroblasts and testis.

The protein resides in the lysosome. It is found in the cytoplasm. The protein localises to the perinuclear region. The enzyme catalyses Hydrolysis of terminal non-reducing beta-D-galactose residues in beta-D-galactosides.. Functionally, cleaves beta-linked terminal galactosyl residues from gangliosides, glycoproteins, and glycosaminoglycans. Its function is as follows. Has no beta-galactosidase catalytic activity, but plays functional roles in the formation of extracellular elastic fibers (elastogenesis) and in the development of connective tissue. Seems to be identical to the elastin-binding protein (EBP), a major component of the non-integrin cell surface receptor expressed on fibroblasts, smooth muscle cells, chondroblasts, leukocytes, and certain cancer cell types. In elastin producing cells, associates with tropoelastin intracellularly and functions as a recycling molecular chaperone which facilitates the secretions of tropoelastin and its assembly into elastic fibers. The protein is Beta-galactosidase (GLB1) of Homo sapiens (Human).